The chain runs to 64 residues: Large ribosomal subunit protein bL35 (64 aa).

Composition is skewed to basic residues over residues 1–15 (MPKAKTHSGASKRFR) and 23–33 (VRQKANRRHLL). Positions 1–47 (MPKAKTHSGASKRFRTTGSGKIVRQKANRRHLLEHKPTSRTRRLDGR) are disordered. The segment covering 34 to 46 (EHKPTSRTRRLDG) has biased composition (basic and acidic residues).

The protein belongs to the bacterial ribosomal protein bL35 family.

The sequence is that of Large ribosomal subunit protein bL35 from Mycobacteroides abscessus (strain ATCC 19977 / DSM 44196 / CCUG 20993 / CIP 104536 / JCM 13569 / NCTC 13031 / TMC 1543 / L948) (Mycobacterium abscessus).